The chain runs to 116 residues: Appetite-regulating hormone (116 aa).

The first 23 residues, 1–23 (MPAPRTICSLLLLSMLWMDLAMA), serve as a signal peptide directing secretion. Residue Ser26 is the site of O-decanoyl serine; alternate attachment. Ser26 is lipidated: O-hexanoyl serine; alternate. The O-octanoyl serine; alternate moiety is linked to residue Ser26. Residues 29-67 (SPEHQKLQRKEPKKPSGRLKPRALEGQFDPDVGSQEEGA) are disordered. The segment covering 31 to 42 (EHQKLQRKEPKK) has biased composition (basic and acidic residues). Residues 51-74 (ALEGQFDPDVGSQEEGAEDELEIR) constitute a propeptide, removed in mature form. Leu97 carries the post-translational modification Leucine amide. Residues 98 to 116 (GKFLQDILWEEAEETLADE) constitute a propeptide, removed in mature form.

The protein belongs to the motilin family. O-octanoylated by GOAT/MBOAT4. O-octanoylation is essential for ghrelin activity. Post-translationally, amidation of Leu-97 is essential for obestatin activity.

It localises to the secreted. Ghrelin is the ligand for growth hormone secretagogue receptor type 1 (GHSR). Induces the release of growth hormone from the pituitary. Has an appetite-stimulating effect, induces adiposity and stimulates gastric acid secretion. Involved in growth regulation. Functionally, obestatin may be the ligand for GPR39. May have an appetite-reducing effect resulting in decreased food intake. May reduce gastric emptying activity and jejunal motility. The polypeptide is Appetite-regulating hormone (GHRL) (Capra hircus (Goat)).